Reading from the N-terminus, the 537-residue chain is Chaperonin GroEL (537 aa).

ATP is bound by residues T30–P33, D87–T91, G414, D477–V479, and D493.

The protein belongs to the chaperonin (HSP60) family. Forms a cylinder of 14 subunits composed of two heptameric rings stacked back-to-back. Interacts with the co-chaperonin GroES.

It is found in the cytoplasm. It carries out the reaction ATP + H2O + a folded polypeptide = ADP + phosphate + an unfolded polypeptide.. Its function is as follows. Together with its co-chaperonin GroES, plays an essential role in assisting protein folding. The GroEL-GroES system forms a nano-cage that allows encapsulation of the non-native substrate proteins and provides a physical environment optimized to promote and accelerate protein folding. The sequence is that of Chaperonin GroEL from Coprothermobacter proteolyticus (strain ATCC 35245 / DSM 5265 / OCM 4 / BT).